The following is a 342-amino-acid chain: MGYTAAVAGASGYVGGELLRLLLAHPDIEIGALTAGGNAGTRLGEHHPHLTPLADRILTETTPETLAGHDIVFLALPHGHSAALAAQLDADTLIVDCGADFRLADAAAWQKFYGSEHAGTWPYGLPELPGARAALAQTRRIAVPGCYPTCGTLALMPAFAEQLVEPEVVVVAASGTSGAGKAAKPHLIASEVMGSVSVYGVGGAHRHNPEFVQNLSAVAETPVRVSFTPVLVPMPRGILATCSAPLKPAIGLDEVRAAYQRHYDAEPFVHLLPEGQWPTTAMTLGANTAAVQVTVDEAAGRLVAVAAIDNLTKGTAGGAIQSANLALGLPETTGLPMTGVAP.

Cys-146 is a catalytic residue.

This sequence belongs to the NAGSA dehydrogenase family. Type 1 subfamily.

It is found in the cytoplasm. The catalysed reaction is N-acetyl-L-glutamate 5-semialdehyde + phosphate + NADP(+) = N-acetyl-L-glutamyl 5-phosphate + NADPH + H(+). It participates in amino-acid biosynthesis; L-arginine biosynthesis; N(2)-acetyl-L-ornithine from L-glutamate: step 3/4. In terms of biological role, catalyzes the NADPH-dependent reduction of N-acetyl-5-glutamyl phosphate to yield N-acetyl-L-glutamate 5-semialdehyde. The polypeptide is N-acetyl-gamma-glutamyl-phosphate reductase (Thermobifida fusca (strain YX)).